The following is a 249-amino-acid chain: Phosphatidylserine decarboxylase proenzyme (249 aa).

Ser-208 acts as the Schiff-base intermediate with substrate; via pyruvic acid in catalysis. Residue Ser-208 is modified to Pyruvic acid (Ser); by autocatalysis.

Belongs to the phosphatidylserine decarboxylase family. PSD-A subfamily. As to quaternary structure, heterodimer of a large membrane-associated beta subunit and a small pyruvoyl-containing alpha subunit. Pyruvate is required as a cofactor. Post-translationally, is synthesized initially as an inactive proenzyme. Formation of the active enzyme involves a self-maturation process in which the active site pyruvoyl group is generated from an internal serine residue via an autocatalytic post-translational modification. Two non-identical subunits are generated from the proenzyme in this reaction, and the pyruvate is formed at the N-terminus of the alpha chain, which is derived from the carboxyl end of the proenzyme. The post-translation cleavage follows an unusual pathway, termed non-hydrolytic serinolysis, in which the side chain hydroxyl group of the serine supplies its oxygen atom to form the C-terminus of the beta chain, while the remainder of the serine residue undergoes an oxidative deamination to produce ammonia and the pyruvoyl prosthetic group on the alpha chain.

The protein localises to the cell membrane. The catalysed reaction is a 1,2-diacyl-sn-glycero-3-phospho-L-serine + H(+) = a 1,2-diacyl-sn-glycero-3-phosphoethanolamine + CO2. The protein operates within phospholipid metabolism; phosphatidylethanolamine biosynthesis; phosphatidylethanolamine from CDP-diacylglycerol: step 2/2. Catalyzes the formation of phosphatidylethanolamine (PtdEtn) from phosphatidylserine (PtdSer). This is Phosphatidylserine decarboxylase proenzyme from Erythrobacter litoralis (strain HTCC2594).